The sequence spans 154 residues: PHA granule-associated protein PhaP (154 aa).

It localises to the cytoplasmic granule. Polyhydroxyalkanoate (PHA) granule structural protein. Important for PHA granule formation and separation, and for cell growth. This is PHA granule-associated protein PhaP (phaP) from Haloferax mediterranei (strain ATCC 33500 / DSM 1411 / JCM 8866 / NBRC 14739 / NCIMB 2177 / R-4) (Halobacterium mediterranei).